The following is a 732-amino-acid chain: Catalase-peroxidase (732 aa).

The first 45 residues, 1–45 (MDTKVDNAGKCPVVHTHTAHGGRSNRDWWPNQLNLRILHQNSSLS), serve as a signal peptide directing secretion. Residues 97-220 (WHSAGTYRTG…LSAVQMGLIY (124 aa)) constitute a cross-link (tryptophyl-tyrosyl-methioninium (Trp-Tyr) (with M-246)). Catalysis depends on His-98, which acts as the Proton acceptor. A cross-link (tryptophyl-tyrosyl-methioninium (Tyr-Met) (with W-97)) is located at residues 220–246 (YVNPEGPNGNPDPLAAARDIRETFARM). A heme b-binding site is contributed by His-261.

This sequence belongs to the peroxidase family. Peroxidase/catalase subfamily. In terms of assembly, homodimer or homotetramer. Heme b serves as cofactor. Formation of the three residue Trp-Tyr-Met cross-link is important for the catalase, but not the peroxidase activity of the enzyme.

The catalysed reaction is H2O2 + AH2 = A + 2 H2O. The enzyme catalyses 2 H2O2 = O2 + 2 H2O. In terms of biological role, bifunctional enzyme with both catalase and broad-spectrum peroxidase activity. The sequence is that of Catalase-peroxidase from Rhizobium rhizogenes (strain K84 / ATCC BAA-868) (Agrobacterium radiobacter).